An 831-amino-acid polypeptide reads, in one-letter code: Prolactin receptor (831 aa).

The N-terminal stretch at 1–23 is a signal peptide; it reads MKQNLISSVQIILLLPLTTVGLT. Residues 24-438 lie on the Extracellular side of the membrane; the sequence is SQSFPGKPKI…EIPNDFRVKD (415 aa). 4 Fibronectin type-III domains span residues 30–128, 129–232, 233–331, and 332–433; these read KPKI…VQPG, SPVN…SPPE, KPTI…VQPD, and PPAN…IPND. The cysteines at positions 36 and 46 are disulfide-linked. N59 carries an N-linked (GlcNAc...) asparagine glycan. The cysteines at positions 75 and 86 are disulfide-linked. N-linked (GlcNAc...) asparagine glycans are attached at residues N91, N100, N112, N132, N262, N303, N315, and N335. D414 and H416 together coordinate Zn(2+). The WSXWS motif motif lies at 419-423; the sequence is WSEWS. Residues 439–459 form a helical membrane-spanning segment; the sequence is MIVWIVLGVLSSLICLIMSWT. At 460–831 the chain is on the cytoplasmic side; the sequence is MVLKGYRMIT…DPSSFMPSFK (372 aa). Positions 471-479 match the Box 1 motif motif; the sequence is ILPPVPGPK. Disordered regions lie at residues 527-563 and 776-831; these read HQLMPSHDSGRPSKNAKITLKETDRDSGRGSCDSPSL and HTPT…PSFK. The span at 545–554 shows a compositional bias: basic and acidic residues; sequence TLKETDRDSG. The segment covering 777–803 has biased composition (polar residues); the sequence is TPTSQEEPAKETSQNPQQGQVETNMSY.

This sequence belongs to the type I cytokine receptor family. Type 1 subfamily.

It localises to the membrane. In terms of biological role, this is a receptor for the anterior pituitary hormone prolactin. The sequence is that of Prolactin receptor (PRLR) from Meleagris gallopavo (Wild turkey).